The chain runs to 336 residues: Ornithine carbamoyltransferase, catabolic (336 aa).

Carbamoyl phosphate is bound by residues 57–60 (STRT), Gln-84, Arg-108, and 136–139 (HPTQ). L-ornithine-binding positions include Asn-169, Asp-233, and 237 to 238 (SM). Carbamoyl phosphate contacts are provided by residues 275–276 (CL) and Arg-322.

Belongs to the aspartate/ornithine carbamoyltransferase superfamily. OTCase family.

Its subcellular location is the cytoplasm. The catalysed reaction is carbamoyl phosphate + L-ornithine = L-citrulline + phosphate + H(+). Its pathway is amino-acid degradation; L-arginine degradation via ADI pathway; carbamoyl phosphate from L-arginine: step 2/2. Functionally, reversibly catalyzes the transfer of the carbamoyl group from carbamoyl phosphate (CP) to the N(epsilon) atom of ornithine (ORN) to produce L-citrulline. In Chromobacterium violaceum (strain ATCC 12472 / DSM 30191 / JCM 1249 / CCUG 213 / NBRC 12614 / NCIMB 9131 / NCTC 9757 / MK), this protein is Ornithine carbamoyltransferase, catabolic.